Consider the following 502-residue polypeptide: Alpha-ketoglutarate-dependent dioxygenase FTO (502 aa).

Residues 32 to 324 (TPKDDEFYQQ…SSTHRVAECS (293 aa)) are fe2OG dioxygenase domain. Residues Arg-96 and Tyr-108 each coordinate substrate. Asn-202 serves as a coordination point for 2-oxoglutarate. The loop L1; predicted to block binding of double-stranded DNA or RNA stretch occupies residues 210-221 (PYLKEEPYFGMG). Lys-213 bears the N6-acetyllysine mark. Fe cation contacts are provided by His-228 and Asp-230. Residue 228–231 (HHDE) coordinates substrate. Residue Tyr-292 participates in 2-oxoglutarate binding. Fe cation is bound at residue His-304. 2-oxoglutarate-binding positions include 313–315 (RFS), Thr-317, and Arg-319.

The protein belongs to the fto family. As to quaternary structure, monomer. May also exist as homodimer. Fe(2+) serves as cofactor. In terms of tissue distribution, ubiquitous. Detected in brain, brain cortex, hypothalamus, cerebellum, liver, pancreas, heart, kidney, white adipose tissue and skeletal muscle. Most abundant in the brain, particularly in hypothalamic nuclei governing energy balance.

It is found in the nucleus. Its subcellular location is the nucleus speckle. It localises to the cytoplasm. The enzyme catalyses a 5'-end (N(7)-methyl 5'-triphosphoguanosine)-(N(6),2'-O-dimethyladenosine) in mRNA + 2-oxoglutarate + O2 = a 5'-end (N(7)-methyl 5'-triphosphoguanosine)-(2'-O-methyladenosine) in mRNA + formaldehyde + succinate + CO2. It catalyses the reaction an N(6)-methyladenosine in mRNA + 2-oxoglutarate + O2 = an adenosine in mRNA + formaldehyde + succinate + CO2. It carries out the reaction N(6)-methyladenosine in U6 snRNA + 2-oxoglutarate + O2 = adenosine in U6 snRNA + formaldehyde + succinate + CO2. The catalysed reaction is a 5'-end (N(7)-methyl 5'-triphosphoguanosine)-(N(6),2'-O-dimethyladenosine) in U6 snRNA + 2-oxoglutarate + O2 = a 5'-end (N(7)-methyl 5'-triphosphoguanosine)-(2'-O-methyladenosine) in U6 snRNA + formaldehyde + succinate + CO2. The enzyme catalyses an N(1)-methyladenosine in tRNA + 2-oxoglutarate + O2 = an adenosine in tRNA + formaldehyde + succinate + CO2. Activated by ascorbate. Inhibited by N-oxalylglycine, fumarate and succinate. Functionally, RNA demethylase that mediates oxidative demethylation of different RNA species, such as mRNAs, tRNAs and snRNAs, and acts as a regulator of fat mass, adipogenesis and energy homeostasis. Specifically demethylates N(6)-methyladenosine (m6A) RNA, the most prevalent internal modification of messenger RNA (mRNA) in higher eukaryotes. M6A demethylation by FTO affects mRNA expression and stability. Also able to demethylate m6A in U6 small nuclear RNA (snRNA). Mediates demethylation of N(6),2'-O-dimethyladenosine cap (m6A(m)), by demethylating the N(6)-methyladenosine at the second transcribed position of mRNAs and U6 snRNA. Demethylation of m6A(m) in the 5'-cap by FTO affects mRNA stability by promoting susceptibility to decapping. Also acts as a tRNA demethylase by removing N(1)-methyladenine from various tRNAs. Has no activity towards 1-methylguanine. Has no detectable activity towards double-stranded DNA. Also able to repair alkylated DNA and RNA by oxidative demethylation: demethylates single-stranded RNA containing 3-methyluracil, single-stranded DNA containing 3-methylthymine and has low demethylase activity towards single-stranded DNA containing 1-methyladenine or 3-methylcytosine. Ability to repair alkylated DNA and RNA is however unsure in vivo. Involved in the regulation of fat mass, adipogenesis and body weight, thereby contributing to the regulation of body size and body fat accumulation. Involved in the regulation of thermogenesis and the control of adipocyte differentiation into brown or white fat cells. Regulates activity of the dopaminergic midbrain circuitry via its ability to demethylate m6A in mRNAs. This Mus musculus (Mouse) protein is Alpha-ketoglutarate-dependent dioxygenase FTO.